The sequence spans 156 residues: MKVIEGGFPAPNAKIAIVISRFNSFINESLLSGAIDTLKRHGQISDDNITVVRCPGAVELPLVAQRVAKTGDYDAIVSLGCVIRGGTPHFDYVCSEMNKGLAQVSLEFSIPVAFGVLTVDTIDQAIERAGTKAGNKGAEAALSALEMINVLSEIDS.

5-amino-6-(D-ribitylamino)uracil is bound by residues Phe-22, 57-59 (AVE), and 81-83 (CVI). 86–87 (GT) lines the (2S)-2-hydroxy-3-oxobutyl phosphate pocket. His-89 functions as the Proton donor in the catalytic mechanism. Residue Phe-114 coordinates 5-amino-6-(D-ribitylamino)uracil. Arg-128 serves as a coordination point for (2S)-2-hydroxy-3-oxobutyl phosphate.

The protein belongs to the DMRL synthase family. As to quaternary structure, forms an icosahedral capsid composed of 60 subunits, arranged as a dodecamer of pentamers.

The catalysed reaction is (2S)-2-hydroxy-3-oxobutyl phosphate + 5-amino-6-(D-ribitylamino)uracil = 6,7-dimethyl-8-(1-D-ribityl)lumazine + phosphate + 2 H2O + H(+). The protein operates within cofactor biosynthesis; riboflavin biosynthesis; riboflavin from 2-hydroxy-3-oxobutyl phosphate and 5-amino-6-(D-ribitylamino)uracil: step 1/2. Functionally, catalyzes the formation of 6,7-dimethyl-8-ribityllumazine by condensation of 5-amino-6-(D-ribitylamino)uracil with 3,4-dihydroxy-2-butanone 4-phosphate. This is the penultimate step in the biosynthesis of riboflavin. This chain is 6,7-dimethyl-8-ribityllumazine synthase, found in Vibrio cholerae serotype O1 (strain ATCC 39315 / El Tor Inaba N16961).